The chain runs to 154 residues: Transcriptional repressor NrdR (154 aa).

A zinc finger lies at 3–34; it reads CPFCGANDTKVIDSRLVAEGEQVRRRRECLAC. The region spanning 49–139 is the ATP-cone domain; it reads PRLIKQDGSR…VYRRFQDLNE (91 aa).

This sequence belongs to the NrdR family. It depends on Zn(2+) as a cofactor.

Negatively regulates transcription of bacterial ribonucleotide reductase nrd genes and operons by binding to NrdR-boxes. The chain is Transcriptional repressor NrdR from Pseudomonas savastanoi pv. phaseolicola (strain 1448A / Race 6) (Pseudomonas syringae pv. phaseolicola (strain 1448A / Race 6)).